Here is a 357-residue protein sequence, read N- to C-terminus: GTPase Obg (357 aa).

One can recognise an Obg domain in the interval 1-159; it reads MKFVDEAFID…RNLKLELKVL (159 aa). One can recognise an OBG-type G domain in the interval 160 to 334; it reads ADVGLLGMPN…LIQAIYQHVR (175 aa). Residues 166–173, 191–195, 213–216, 284–287, and 315–317 contribute to the GTP site; these read GMPNAGKS, FTTLH, DIPG, NKLD, and SAL. The Mg(2+) site is built by S173 and T193.

This sequence belongs to the TRAFAC class OBG-HflX-like GTPase superfamily. OBG GTPase family. As to quaternary structure, monomer. Mg(2+) serves as cofactor.

It localises to the cytoplasm. An essential GTPase which binds GTP, GDP and possibly (p)ppGpp with moderate affinity, with high nucleotide exchange rates and a fairly low GTP hydrolysis rate. Plays a role in control of the cell cycle, stress response, ribosome biogenesis and in those bacteria that undergo differentiation, in morphogenesis control. The polypeptide is GTPase Obg (Paracidovorax citrulli (strain AAC00-1) (Acidovorax citrulli)).